The following is a 359-amino-acid chain: Guanine nucleotide-binding protein alpha-4 subunit (359 aa).

Gly2 carries N-myristoyl glycine lipidation. Cys3 is lipidated: S-palmitoyl cysteine. Residues 31–359 form the G-alpha domain; it reads GEIKLLLLGA…RNNLYLCGLY (329 aa). The interval 34–47 is G1 motif; it reads KLLLLGAGESGKST. GTP contacts are provided by residues 39–46, 178–184, 203–207, 272–275, and Ala331; these read GAGESGKS, LRARVKS, DVGGQ, and NKMD. Position 46 (Ser46) interacts with Mg(2+). A G2 motif region spans residues 176-184; sequence DILRARVKS. The tract at residues 199–208 is G3 motif; the sequence is FKMFDVGGQR. The segment at 268 to 275 is G4 motif; the sequence is ILFLNKMD. Residues 329–334 are G5 motif; sequence TCATDT.

Belongs to the G-alpha family. G(i/o/t/z) subfamily. In terms of assembly, g proteins are composed of 3 units; alpha, beta and gamma. The alpha chain contains the guanine nucleotide binding site. In terms of tissue distribution, expressed in ASI neurons.

Its function is as follows. Guanine nucleotide-binding proteins (G proteins) are involved as modulators or transducers in various transmembrane signaling systems. Acts in concert with npr-15 to activate TGF-beta-like daf-7 secretion in the ASI neuron, thereby promoting larval development and inhibition of dauer diapause. The protein is Guanine nucleotide-binding protein alpha-4 subunit (gpa-4) of Caenorhabditis elegans.